The following is a 302-amino-acid chain: uncharacterized protein (302 aa).

9 helical membrane-spanning segments follow: residues 10–30, 65–85, 102–122, 130–150, 162–182, 190–210, 224–244, 251–271, and 282–302; these read VLSV…GVLG, LVLI…IAYL, VAAA…GIFG, IFYD…LSHI, AVFF…LWGL, ILGY…GLTL, LVSG…SYVL, FSVT…VLAI, and SCIF…SVVL.

The protein belongs to the auxin efflux carrier (TC 2.A.69) family.

The protein localises to the cell membrane. This is an uncharacterized protein from Methanothermobacter thermautotrophicus (strain ATCC 29096 / DSM 1053 / JCM 10044 / NBRC 100330 / Delta H) (Methanobacterium thermoautotrophicum).